The chain runs to 338 residues: 4-hydroxy-2-oxovalerate aldolase (338 aa).

A Pyruvate carboxyltransferase domain is found at 4-254 (PRLTDTTLRD…NPGLDVLALM (251 aa)). 12 to 13 (RD) lines the substrate pocket. Residue aspartate 13 participates in Mn(2+) binding. Histidine 16 serves as the catalytic Proton acceptor. Serine 166 and histidine 193 together coordinate substrate. Mn(2+)-binding residues include histidine 193 and histidine 195. Residue tyrosine 284 participates in substrate binding.

This sequence belongs to the 4-hydroxy-2-oxovalerate aldolase family.

The enzyme catalyses (S)-4-hydroxy-2-oxopentanoate = acetaldehyde + pyruvate. In Roseiflexus sp. (strain RS-1), this protein is 4-hydroxy-2-oxovalerate aldolase.